Consider the following 227-residue polypeptide: MNIKGSPWKGSLLLLLVSNLLLCQNVAPLPICPGGAARCQVTLRDLFDRAVVLSHYIHNLSSEMFSEFDKRYTHGRGFITRAINSCHTSSLPTPEDKEQAQQMNQKDFLSLIVSILRSWNEPLYHLVTEVRGMEEAPEAILSKAVEIEEQTKRLLEGMELIVSQVHPETKENEIYPVWTGLPSLQMADEESRLSAYYNLLHCLRRDSHKIDNYLKLLKCRIIHNNNC.

The signal sequence occupies residues 1–28 (MNIKGSPWKGSLLLLLVSNLLLCQNVAP). A disulfide bridge links C32 with C39. Residue S54 is modified to Phosphoserine. An N-linked (GlcNAc...) asparagine glycan is attached at N59. Residues S62 and S118 each carry the phosphoserine modification. Cystine bridges form between C86–C202 and C219–C227.

Belongs to the somatotropin/prolactin family. In terms of assembly, interacts with PRLR.

The protein localises to the secreted. Functionally, prolactin acts primarily on the mammary gland by promoting lactation. This chain is Prolactin (PRL), found in Macaca mulatta (Rhesus macaque).